The following is a 432-amino-acid chain: Serine/threonine-protein phosphatase 2A activator 1 (432 aa).

This sequence belongs to the PTPA-type PPIase family.

It localises to the cytoplasm. The protein localises to the nucleus. It carries out the reaction [protein]-peptidylproline (omega=180) = [protein]-peptidylproline (omega=0). PPIases accelerate the folding of proteins. It catalyzes the cis-trans isomerization of proline imidic peptide bonds in oligopeptides. Acts as a regulatory subunit for PP2A-like phosphatases modulating their activity or substrate specificity, probably by inducing a conformational change in the catalytic subunit, a direct target of the PPIase. Can reactivate inactive phosphatase PP2A-phosphatase methylesterase complexes (PP2Ai) in presence of ATP and Mg(2+) by dissociating the inactive form from the complex. This is Serine/threonine-protein phosphatase 2A activator 1 (rrd1) from Emericella nidulans (strain FGSC A4 / ATCC 38163 / CBS 112.46 / NRRL 194 / M139) (Aspergillus nidulans).